Consider the following 509-residue polypeptide: MTTFNEYPFLAELGIKAENNDGVFNGKWGGAGEIIKCLNPTNNKVIATVRGAAPEEYETCIQAMLAAKVKWALTPAPRRGEIVRLIGQAMREKIEPLSKLISLEMGKIYIEAKGEVQEFIDVCDYATGLSRSINGQVMPSERPNHILMETWNPLGLVGIITAFNFPCAVLGWNAAISMICGNVQLWKGASTTSLITLAVSKIIEKVLVENDVDPAVCCVLIGPGRTVGEQMIQDKRFGLISFTGSTEVGRRISSTVHGYFGKTILELGGNNAIVVAEDADIELVLRAVLFASVGTTGQRCTTCRRLFVHESLYDTILERLTKAYKTIKIGNPLEEGVLVGPLHTQSAVKEFTEGLEEIKKQGGKVVIGGNKLDISGGNFVEPTVVAIEHDAPIVKTELFVPILYIMKFKNLDDAFAWNNEVPQGLSSSLFTNNQKNIFKWLGPTGSDCGIVNVNVATNGAEIGGAFGGEKETGGGRESGSDSWKQYCRRSTNTINYGNTMPLSQGINFN.

244 to 249 is an NAD(+) binding site; that stretch reads GSTEVG. Residue Glu266 is the Proton acceptor of the active site. Cys300 functions as the Nucleophile in the catalytic mechanism.

It belongs to the aldehyde dehydrogenase family. Homotetramer.

The enzyme catalyses an aldehyde + NAD(+) + H2O = a carboxylate + NADH + 2 H(+). The chain is Putative aldehyde dehydrogenase family 7 member A1 homolog from Dictyostelium discoideum (Social amoeba).